The chain runs to 188 residues: Elongation factor P (188 aa).

This sequence belongs to the elongation factor P family.

Its subcellular location is the cytoplasm. It participates in protein biosynthesis; polypeptide chain elongation. Its function is as follows. Involved in peptide bond synthesis. Stimulates efficient translation and peptide-bond synthesis on native or reconstituted 70S ribosomes in vitro. Probably functions indirectly by altering the affinity of the ribosome for aminoacyl-tRNA, thus increasing their reactivity as acceptors for peptidyl transferase. The sequence is that of Elongation factor P from Bdellovibrio bacteriovorus (strain ATCC 15356 / DSM 50701 / NCIMB 9529 / HD100).